Consider the following 223-residue polypeptide: Cytidylate kinase (223 aa).

13–21 serves as a coordination point for ATP; sequence GPSASGKGT.

Belongs to the cytidylate kinase family. Type 1 subfamily.

The protein resides in the cytoplasm. It catalyses the reaction CMP + ATP = CDP + ADP. The enzyme catalyses dCMP + ATP = dCDP + ADP. This is Cytidylate kinase from Nitrosomonas europaea (strain ATCC 19718 / CIP 103999 / KCTC 2705 / NBRC 14298).